A 693-amino-acid polypeptide reads, in one-letter code: Tegument protein UL47 (693 aa).

Disordered stretches follow at residues 1 to 32 (MSAREPAGRRRRASTRPRASPVADEPAGDGVG) and 48 to 126 (ELEA…GYLG). The span at 48–57 (ELEALEEMAG) shows a compositional bias: acidic residues. Positions 50–75 (EALEEMAGDEPPVRRRREGPRARRRR) are RNA-binding. A Nuclear localization signal motif is present at residues 63–75 (RRRREGPRARRRR). Over residues 63–75 (RRRREGPRARRRR) the composition is skewed to basic residues. Positions 647 to 670 (SVLGPRVRVVDIMSQFRKLLMGDE) match the Nuclear export signal motif.

This sequence belongs to the alphaherpesvirinae HHV-1 UL47 family. In terms of assembly, interacts with US3 kinase. Interacts with UL31 and UL34; these interactions seem important for efficient virion nuclear egress. Interacts with UL41/VHS. Phosphorylated by US3. This phosphorylation is required for proper nuclear localization.

It is found in the virion tegument. It localises to the host nucleus. The protein resides in the host cytoplasm. Its function is as follows. Tegument protein that can bind to various RNA transcripts. Plays a role in the attenuation of selective viral and cellular mRNA degradation by modulating the activity of host shutoff RNase UL41/VHS. Also plays a role in the primary envelopment of virions in the perinuclear space, probably by interacting with two nuclear egress proteins UL31 and UL34. In Homo sapiens (Human), this protein is Tegument protein UL47.